The primary structure comprises 196 residues: Glycerol-3-phosphate acyltransferase (196 aa).

A run of 4 helical transmembrane segments spans residues 3–23, 78–98, 112–132, and 154–174; these read NAVFVIAAYLLGSISFGILVS, VGVVCWVAVAVFLGHLYPVFY, VLLAFSPLLAGLALLSWIVVF, and WLLLPQIGYIIVVFVLSLLLI.

Belongs to the PlsY family. Probably interacts with PlsX.

It is found in the cell inner membrane. The catalysed reaction is an acyl phosphate + sn-glycerol 3-phosphate = a 1-acyl-sn-glycero-3-phosphate + phosphate. The protein operates within lipid metabolism; phospholipid metabolism. Its function is as follows. Catalyzes the transfer of an acyl group from acyl-phosphate (acyl-PO(4)) to glycerol-3-phosphate (G3P) to form lysophosphatidic acid (LPA). This enzyme utilizes acyl-phosphate as fatty acyl donor, but not acyl-CoA or acyl-ACP. The sequence is that of Glycerol-3-phosphate acyltransferase from Methylobacillus flagellatus (strain ATCC 51484 / DSM 6875 / VKM B-1610 / KT).